We begin with the raw amino-acid sequence, 488 residues long: MAEATDVVLVGGGIMSATLGVLLKELEPSWEITLIERLEDVALESSNAWNNAGTGHSALCELNYAPLGANGIIDPARALNIAEQFHVSRQFWATLVAEGKLEDNSFINAVPHMSLVMNEDHCSYLQKRYDAFKTQKLFENMEFSTDRNKISDWAPLMMRGRDENQPVAANYSAEGTDVDFGRLTRQMVKYLQGKGVKTEFNRHVEDIKRESDGAWVLKTADTRNPDGQLTLRTRFLFLGAGGGALTLLQKSGIPEGKGYGGFPVSGLFFRNSNPETAEQHNAKVYGQASVGAPPMSVPHLDTRNVDGKRHLMFGPYAGFRSNFLKQGSLMDLPLSIHMDNLYPMLCAGWANMPLTKYLLGELRKTKEERFASLLEYYPEANPDDWELITAGQRVQIIKKDSEKGGVLQFGTEIVAHADGSLAALLGASPGASTAVPLMIRLMHQCFPERAPSWEDRLKELVPGYGIKLNENPERADEIIAYTAKVLDI.

This sequence belongs to the MQO family. FAD serves as cofactor.

The enzyme catalyses (S)-malate + a quinone = a quinol + oxaloacetate. Its pathway is carbohydrate metabolism; tricarboxylic acid cycle; oxaloacetate from (S)-malate (quinone route): step 1/1. The chain is Probable malate:quinone oxidoreductase from Neisseria meningitidis serogroup B (strain ATCC BAA-335 / MC58).